The primary structure comprises 804 residues: Elongation factor G, mitochondrial (804 aa).

A mitochondrion-targeting transit peptide spans 1-63; sequence MSMHRVARAV…RHFFQSPIIR (63 aa). A tr-type G domain is found at 99-385; sequence RRVRNIGIAA…AVCDYLPNPA (287 aa). GTP is bound by residues 108–115, 183–187, and 237–240; these read AHIDSGKT, DTPGH, and NKMD.

The protein belongs to the TRAFAC class translation factor GTPase superfamily. Classic translation factor GTPase family. EF-G/EF-2 subfamily.

The protein resides in the mitochondrion. The protein operates within protein biosynthesis; polypeptide chain elongation. Functionally, mitochondrial GTPase that catalyzes the GTP-dependent ribosomal translocation step during translation elongation. During this step, the ribosome changes from the pre-translocational (PRE) to the post-translocational (POST) state as the newly formed A-site-bound peptidyl-tRNA and P-site-bound deacylated tRNA move to the P and E sites, respectively. Catalyzes the coordinated movement of the two tRNA molecules, the mRNA and conformational changes in the ribosome. This Sclerotinia sclerotiorum (strain ATCC 18683 / 1980 / Ss-1) (White mold) protein is Elongation factor G, mitochondrial (mef1).